Reading from the N-terminus, the 162-residue chain is MLKRCLWLVVTVLFAWQVFNGTAIAAQLDATTRTVALNDQGKNITLSRRQVEDGQRLFNEACASCHAGGITKTNPSLDLSPETLALATPRRDSVAGLVDYMKDPTTYDGEDSIAEIHPSIKSADIYPKMRNLSEQDLTAIAGYILVQPKVQGEKWGGGKIYF.

The first 25 residues, methionine 1 to alanine 25, serve as a signal peptide directing secretion. Heme c-binding residues include cysteine 62, cysteine 65, histidine 66, and histidine 117.

It belongs to the cytochrome c family. PsbV subfamily. PSII is composed of 1 copy each of membrane proteins PsbA, PsbB, PsbC, PsbD, PsbE, PsbF, PsbH, PsbI, PsbJ, PsbK, PsbL, PsbM, PsbT, PsbX, PsbY, PsbZ, Psb30/Ycf12, peripheral proteins PsbO, CyanoQ (PsbQ), PsbU, PsbV and a large number of cofactors. It forms dimeric complexes. Heme c serves as cofactor.

It is found in the cellular thylakoid membrane. In terms of biological role, one of the extrinsic, lumenal subunits of photosystem II (PSII). PSII is a light-driven water plastoquinone oxidoreductase, using light energy to abstract electrons from H(2)O, generating a proton gradient subsequently used for ATP formation. The extrinsic proteins stabilize the structure of photosystem II oxygen-evolving complex (OEC), the ion environment of oxygen evolution and protect the OEC against heat-induced inactivation. Low-potential cytochrome c that plays a role in the OEC of PSII. The polypeptide is Photosystem II extrinsic protein V (Cyanothece sp. (strain PCC 7425 / ATCC 29141)).